A 1693-amino-acid chain; its full sequence is MEAHQFIKAPGITTAIEQAALAAANSALANAVVVRPFLSHQQIEILINLMQPRQLVFRPEVFWNHPIQRVIHNELELYCRARSGRCLEIGAHPRSINDNPNVVHRCFLRPAGRDVQRWYTAPTRGPAANCRRSALRGLPAADRTYCFDGFSGCNFPAETGVALYSLHDMSPSDVAEAMFRHGMTRLYAALHLPPEVLLPPGTYRTASYLLIHDGRRVVVTYEGDTSAGYNHDVSNLRSWIRTTKVTGDHPLVIERVRAIGCHFVLLLTAAPEPSPTPYVPYPRSTEVYVRSIFGPGGTPSLFPTSCSTKSTFHAVPAHIWDRLMLFGATLDDQAFCCSRLMTYLRGISYKVTVGTLVANEGWNASEVALTAVITAAYLTICHQRYLRTQAISKGMRRLEREHAQKFITRLYSWLFEKSGRDYIPGRQLEFYAQCRRWLSAGFHLDPRVLVFDESAPCHCRTAIRKAVSKFCCFMKWLGQECTCFLQPAEGAVGDQGHDNEAYEGSDVDPAESAISDISGSYVVPGTALQPLYQALDLPAEIVARAGRLTATVKVSQVDGRIDCETLLGNKTFRTSFVDGAVLETNGPERHNLSFDASQSTMAAGPFSLTYAASAAGLEVRYVAAGLDHRAVFAPGVSPRSAPGEVTAFCSALYRFNREAQRLSLTGNFWFHPEGLLGPFAPFSPGHVWESANPFCGESTLYTRTWSEVDAVSSPAQPDLGFISEPSIPSRAATLTPAAPLPPPAPDPSPTPSAPARGEPAPGATARAPAITHQAARHRRLLFTYPDGSKVFAGSLFESTCTWLVNASNVDHRPGGGLCHAFYQRYPASFDAASFVMRDGAAAYTLTPRPIIHAVAPDYRLEHNPKMLEAAYRETCSRLGTAAYPLLGTGIYQVPIGPSFDAWERNHRPGDELYLPELAARWFEANRPTCPTLTITEDVARTANLAIELDSATDVGRACAGCRVTPGVVQYQFTAGVPGSGKSRSITQADVDVVVVPTRELRNAWRRRGFAAFTPHTAARVTQGRRVVIDEAPSLPPHLLLLHMQRAATVHLLGDPNQIPAIDFEHAGLVPAIRPDLAPTSWWHVTHRCPADVCELIRGAYPMIQTTSRVLRSLFWGEPAVGQKLVFTQAAKAANPGSVTVHEAQGATYTETTIIATADARGLIQSSRAHAIVALTRHTEKCVIIDAPGLLREVGISDAIVNNFFLAGGEIGHQRPSVIPRGNPDANVDTLAAFPPSCQISAFHQLAEELGHRPAPVAAVLPPCPELEQGLLYLPQELTTCDSVVTFELTDIVHCRMAAPSQRKAVLSTLVGHYGRRTKLYNASHSDVRDSLARFIPAIGHVQVTTCELYELVEAMVEKGQDGSAVLELDLCNRDVSRITFFQKDCNKFTTGETIAHGKVGQGISAWSKTFCALFGPWFRAIEKAILALLPQGVFYGDAFDDTVFSAAVAAARASMVFENDFSEFDSTQNNFSLGLECAIMVECGMPQWLIRLYHLIRSAWILQAPKESLRGFWKKHSGEPGTLLWNTVWNMAVITHCYDFRDLQVAAFKGDDSIVLCSEYRQSPGAAVLIAGCGLKLKVDFRPIGLYAGVVVAPGLGALPDVVRFAGRLTEKNWGPGPERAKQLRLAVSDFLRKLTNVAQMCVDVVSRVYGVSPGLVHNLIGMLQAVADGKAHFTESVKPVLDLTNSILCRVE.

An Alphavirus-like MT domain is found at valine 56–isoleucine 240. The tract at residues arginine 241–serine 439 is Y-domain. Cysteine 434 and cysteine 481 are disulfide-bonded. Residues phenylalanine 442–proline 509 are protease. Positions alanine 510–alanine 691 are zinc-binding. 3 residues coordinate Zn(2+): histidine 671, glutamate 673, and histidine 686. Residues serine 712–isoleucine 770 form a hinge region. Residues alanine 732–proline 768 are disordered. Over residues alanine 738 to serine 752 the composition is skewed to pro residues. Residues alanine 775 to tryptophan 921 form the Macro domain. The 149-residue stretch at isoleucine 934 to tryptophan 1082 folds into the (+)RNA virus helicase ATP-binding domain. The interval glycine 960–phenylalanine 1204 is NTPase/helicase. Glycine 975–serine 982 contributes to the ATP binding site. The (+)RNA virus helicase C-terminal domain occupies histidine 1083 to serine 1216. Residues glycine 1207–glutamate 1693 are RNA-directed RNA polymerase. One can recognise a RdRp catalytic domain in the interval serine 1454–glycine 1565.

This sequence belongs to the hepevirus non-structural polyprotein family. The protease domain interacts with host EIF2AK4 (via C-terminus); this interaction inhibits dimerization of EIF2AK4 and prevents EIF2AK4-mediated phosphorylation of host EIF2A. Mg(2+) is required as a cofactor. ORF1 polyprotein does not seem to be processed into distinct enzymatic domains by a viral protease belonging to ORF1, but could be processed by a host serine protease like thrombin.

It localises to the host cytoplasm. The protein resides in the host perinuclear region. The enzyme catalyses GTP + S-adenosyl-L-methionine = N(7)-methyl-GTP + S-adenosyl-L-homocysteine. It carries out the reaction RNA(n) + a ribonucleoside 5'-triphosphate = RNA(n+1) + diphosphate. Its activity is regulated as follows. Putative protease: Inhibited by chymostatin. In terms of biological role, methyltransferase: Displays a capping enzyme activity. This function is necessary since all viral RNAs are synthesized in the cytoplasm, and host capping enzymes are restricted to the nucleus. The enzymatic reaction involves a covalent link between 7-methyl-GMP and the methyltransferase, whereas eukaryotic capping enzymes form a covalent complex only with GMP. Methyltransferase catalyzes transfer of a methyl group from S-adenosylmethionine to GTP and GDP to yield m(7)GTP or m(7)GDP. GDP is a better substrate than GTP. This enzyme also displays guanylyltransferase activity to form a covalent complex, methyltransferase-m(7)GMP, from which 7-methyl-GMP is transferred to the mRNA to create the cap structure. Functionally, Y-domain: Indispensable for virus replication. Putative protease: The putative protease domain, although necessary for replication of the virus, may not be a protease but rather a structural Zn(2+)-binding domain. Inhibits induction of IFN-beta by MDA5 and RIG-I pathways and down-regulates the expression of MDA5. Its function is as follows. NTPase/helicase: Multi-functional protein that exhibits NTPase and RNA unwinding activities. Hydrolyzes all NTPs efficiently and unwinds RNA duplexes containing 5' overhangs. Possesses a sequence independent RNA-5'-triphosphatase (RTPase) activity suggestive of its role in forming viral cap structure. Also participates in viral genome replication, RNA translocation and genome packaging/unpackaging. In terms of biological role, RNA-directed RNA polymerase: Plays an essential role in the virus replication. Binds to the 3'-end of the genomic RNA to initiate viral replication. This chain is Non-structural polyprotein pORF1, found in Homo sapiens (Human).